A 364-amino-acid chain; its full sequence is Nucleoside ABC transporter permease protein NupB (364 aa).

8 helical membrane-spanning segments follow: residues 9 to 29 (LVPLIAIVFGFLLGAIIMLAF), 77 to 99 (FNIGMSGQALAGWISSMWFALSF), 105 to 125 (LLMIPLVVIIGMVFGAFMGFI), 138 to 158 (VITTIMLNYIMLFFSTFMIHS), 195 to 215 (TLNIGLIIAIIALVIMAIIFT), 244 to 264 (LILSMVVAGALAGLGGVVYGF), 284 to 304 (MAVALLGGNSPIGILFAALLF), and 326 to 346 (VVTAAIIFFIAVKFIIEVMLP).

This sequence belongs to the binding-protein-dependent transport system permease family. In terms of assembly, the complex is composed of two ATP-binding proteins (NupA), two transmembrane proteins (NupB and NupC) and a solute-binding protein (BmpA).

The protein resides in the cell membrane. Its function is as follows. Part of an ABC transporter complex involved in the uptake of all common nucleosides. Responsible for the translocation of the substrate across the membrane. The polypeptide is Nucleoside ABC transporter permease protein NupB (Lactococcus lactis subsp. cremoris (strain MG1363)).